The sequence spans 216 residues: Glycerol-3-phosphate acyltransferase (216 aa).

5 consecutive transmembrane segments (helical) span residues 4-24 (TIIG…LWIG), 71-91 (LPFF…LAVI), 113-133 (VVLG…ASIL), 144-164 (VLSA…GFIL), and 165-185 (PSYD…IILR).

It belongs to the PlsY family. As to quaternary structure, probably interacts with PlsX.

The protein resides in the cell membrane. It carries out the reaction an acyl phosphate + sn-glycerol 3-phosphate = a 1-acyl-sn-glycero-3-phosphate + phosphate. Its pathway is lipid metabolism; phospholipid metabolism. In terms of biological role, catalyzes the transfer of an acyl group from acyl-phosphate (acyl-PO(4)) to glycerol-3-phosphate (G3P) to form lysophosphatidic acid (LPA). This enzyme utilizes acyl-phosphate as fatty acyl donor, but not acyl-CoA or acyl-ACP. This chain is Glycerol-3-phosphate acyltransferase, found in Streptococcus sanguinis (strain SK36).